The primary structure comprises 360 residues: DNA integrity scanning protein DisA (360 aa).

The 139-residue stretch at aspartate 9–threonine 147 folds into the DAC domain. Residues glycine 76, leucine 94, and threonine 107–threonine 111 each bind ATP.

The protein belongs to the DisA family. Homooctamer. It depends on Mg(2+) as a cofactor.

The catalysed reaction is 2 ATP = 3',3'-c-di-AMP + 2 diphosphate. Its function is as follows. Participates in a DNA-damage check-point that is active prior to asymmetric division when DNA is damaged. DisA forms globular foci that rapidly scan along the chromosomes during sporulation, searching for lesions. When a lesion is present, DisA pauses at the lesion site. This triggers a cellular response that culminates in a temporary block in sporulation initiation. Also has diadenylate cyclase activity, catalyzing the condensation of 2 ATP molecules into cyclic di-AMP (c-di-AMP). c-di-AMP acts as a signaling molecule that couples DNA integrity with progression of sporulation. The rise in c-di-AMP level generated by DisA while scanning the chromosome, operates as a positive signal that advances sporulation; upon encountering a lesion, the DisA focus arrests at the damaged site and halts c-di-AMP synthesis. The protein is DNA integrity scanning protein DisA of Acetivibrio thermocellus (strain ATCC 27405 / DSM 1237 / JCM 9322 / NBRC 103400 / NCIMB 10682 / NRRL B-4536 / VPI 7372) (Clostridium thermocellum).